Here is a 327-residue protein sequence, read N- to C-terminus: Tryptophan--tRNA ligase (327 aa).

ATP-binding positions include 9–11 (RPT) and 17–18 (GN). The 'HIGH' region signature appears at 10–18 (PTGNLHLGN). Asp133 lines the L-tryptophan pocket. Residues 145–147 (GKD), Val186, and 194–198 (KMGKS) contribute to the ATP site. A 'KMSKS' region motif is present at residues 194 to 198 (KMGKS).

Belongs to the class-I aminoacyl-tRNA synthetase family. Homodimer.

Its subcellular location is the cytoplasm. The enzyme catalyses tRNA(Trp) + L-tryptophan + ATP = L-tryptophyl-tRNA(Trp) + AMP + diphosphate + H(+). Functionally, catalyzes the attachment of tryptophan to tRNA(Trp). This chain is Tryptophan--tRNA ligase, found in Porphyromonas gingivalis (strain ATCC BAA-308 / W83).